Consider the following 321-residue polypeptide: Glucokinase (321 aa).

Gly-8–Thr-13 provides a ligand contact to ATP.

It belongs to the bacterial glucokinase family.

The protein resides in the cytoplasm. The catalysed reaction is D-glucose + ATP = D-glucose 6-phosphate + ADP + H(+). In Klebsiella pneumoniae (strain 342), this protein is Glucokinase.